The chain runs to 555 residues: Transmembrane protein 87B (555 aa).

The first 42 residues, 1–42 (MAAACRSEAGLLPSLLCRRPAGAQLLRVALCLLCWVPAAVDA), serve as a signal peptide directing secretion. The Lumenal portion of the chain corresponds to 43–216 (VPELGLWTRT…HGYISASDWP (174 aa)). N-linked (GlcNAc...) asparagine glycans are attached at residues Asn68, Asn160, and Asn198. A helical membrane pass occupies residues 217–237 (LMIFYMVMCIVYILYGVLWLL). Residues 238-248 (WSACYWKDILR) lie on the Cytoplasmic side of the membrane. Residues 249-269 (IQFWIAAVIFLGMLEKAVFYS) traverse the membrane as a helical segment. Topologically, residues 270–300 (EYQNINSTGLSTQGLLIFAELISAVKRTLAR) are lumenal. Asn275 carries N-linked (GlcNAc...) asparagine glycosylation. The chain crosses the membrane as a helical span at residues 301–321 (LLVIIVSLGYGIVKPRLGTVM). The Cytoplasmic segment spans residues 322-323 (HR). The chain crosses the membrane as a helical span at residues 324–344 (VIGLGLLYLIFAAIEGVMRVI). Topologically, residues 345–351 (GGSKHLA) are lumenal. Residues 352-372 (VVLTDIVLAVIDSIFVWFIFI) form a helical membrane-spanning segment. The Cytoplasmic portion of the chain corresponds to 373 to 394 (SLAQTMKTLRLRKNTVKFSLYR). A helical transmembrane segment spans residues 395-415 (HFTNTLIFAVLASIVFMVWTT). Residues 416-429 (KTFRIAKCQSDWME) lie on the Lumenal side of the membrane. A helical transmembrane segment spans residues 430 to 450 (LWVDDAFWSFLFSVILIVIMF). The Cytoplasmic segment spans residues 451–555 (LWRPSANNQR…EKMFSSEKIM (105 aa)). Residues Ser470, Ser497, and Ser534 each carry the phosphoserine modification.

Belongs to the LU7TM family. TMEM87 subfamily.

It localises to the golgi apparatus membrane. May be involved in retrograde transport from endosomes to the trans-Golgi network (TGN). In Mus musculus (Mouse), this protein is Transmembrane protein 87B.